The chain runs to 154 residues: UPF0225 protein YPDSF_0962 (154 aa).

The protein belongs to the UPF0225 family.

This is UPF0225 protein YPDSF_0962 from Yersinia pestis (strain Pestoides F).